Reading from the N-terminus, the 643-residue chain is Fructose-1,6-bisphosphatase class 3 (643 aa).

The protein belongs to the FBPase class 3 family. Mn(2+) is required as a cofactor.

It catalyses the reaction beta-D-fructose 1,6-bisphosphate + H2O = beta-D-fructose 6-phosphate + phosphate. It participates in carbohydrate biosynthesis; gluconeogenesis. The protein is Fructose-1,6-bisphosphatase class 3 of Lacticaseibacillus paracasei (strain ATCC 334 / BCRC 17002 / CCUG 31169 / CIP 107868 / KCTC 3260 / NRRL B-441) (Lactobacillus paracasei).